We begin with the raw amino-acid sequence, 728 residues long: Double-strand break repair protein mre-11 (728 aa).

Over residues 1 to 12 (MCGSDDSFDDFV) the composition is skewed to acidic residues. The interval 1-45 (MCGSDDSFDDFVPDSQEPASSRTRNQDHLDDDEVPCSQRPDAAND) is disordered. Residues D73, H75, D113, and N181 each contribute to the Mn(2+) site. H182 (proton donor) is an active-site residue. The Mn(2+) site is built by H269, H301, and H303. The tract at residues 601-728 (KNPVADVEME…PSKKRDLSFF (128 aa)) is disordered. Positions 607–616 (VEMEEDEDDP) are enriched in acidic residues. Positions 622–632 (PQSTSRTNYAS) are enriched in polar residues. A compositionally biased stretch (acidic residues) spans 634-645 (SEDEVANSDEEM).

Belongs to the MRE11/RAD32 family. As to quaternary structure, component of the MRN complex composed of two heterodimers rad-50 and mre-11 associated with a single nbs-1. Requires Mn(2+) as cofactor.

The protein localises to the nucleus. Its subcellular location is the chromosome. In terms of biological role, core component of the MRN complex, which plays a central role in double-strand break (DSB) repair, DNA recombination, maintenance of telomere integrity and meiosis. The MRN complex is involved in the repair of DNA double-strand breaks (DSBs) via homologous recombination (HR), an error-free mechanism which primarily occurs during S and G2 phases. The complex (1) mediates the end resection of damaged DNA, which generates proper single-stranded DNA, a key initial steps in HR, and is (2) required for the recruitment of other repair factors and efficient activation of ATM and ATR upon DNA damage. Within the MRN complex, mre-11 possesses both single-strand endonuclease activity and double-strand-specific 3'-5' exonuclease activity. Mre-11 first endonucleolytically cleaves the 5' strand at DNA DSB ends to prevent non-homologous end joining (NHEJ) and licence HR. It then generates a single-stranded DNA gap via 3' to 5' exonucleolytic degradation, which is required for single-strand invasion and recombination. Required for meiotic crossing over and chiasma formation. Pachytene morphology and homolog pairing are normal. Vital in long term for maintenance of reproductive capacity of subsequent generations. The sequence is that of Double-strand break repair protein mre-11 from Caenorhabditis elegans.